A 401-amino-acid polypeptide reads, in one-letter code: 8-amino-7-oxononanoate synthase (401 aa).

Arg-24 contributes to the substrate binding site. 111 to 112 (GF) is a pyridoxal 5'-phosphate binding site. His-137 serves as a coordination point for substrate. 3 residues coordinate pyridoxal 5'-phosphate: Ser-183, His-211, and Thr-240. Lys-243 carries the N6-(pyridoxal phosphate)lysine modification. Thr-357 serves as a coordination point for substrate.

Belongs to the class-II pyridoxal-phosphate-dependent aminotransferase family. BioF subfamily. Homodimer. Pyridoxal 5'-phosphate is required as a cofactor.

The enzyme catalyses 6-carboxyhexanoyl-[ACP] + L-alanine + H(+) = (8S)-8-amino-7-oxononanoate + holo-[ACP] + CO2. It participates in cofactor biosynthesis; biotin biosynthesis. Functionally, catalyzes the decarboxylative condensation of pimeloyl-[acyl-carrier protein] and L-alanine to produce 8-amino-7-oxononanoate (AON), [acyl-carrier protein], and carbon dioxide. The protein is 8-amino-7-oxononanoate synthase of Xylella fastidiosa (strain M23).